We begin with the raw amino-acid sequence, 352 residues long: Fatty acid synthase (352 aa).

In terms of domain architecture, Ketosynthase family 3 (KS3) spans 1 to 352 (MEDVVIAGIA…KVVLSLEHGL (352 aa)). Residues C161, H293, and H331 each act as for beta-ketoacyl synthase activity in the active site.

As to quaternary structure, homodimer which monomers are arranged in a head to tail fashion.

It carries out the reaction acetyl-CoA + n malonyl-CoA + 2n NADPH + 2n H(+) = a long-chain fatty acid + (n+1) CoA + n CO2 + 2n NADP(+).. In terms of biological role, fatty acid synthetase catalyzes the formation of long-chain fatty acids from acetyl-CoA, malonyl-CoA and NADPH. This multifunctional protein has 7 catalytic activities as an acyl carrier protein. The protein is Fatty acid synthase (FASN) of Anser anser anser (Western greylag goose).